The chain runs to 620 residues: MAEPVLEDTYLTFSSDFDYIAIAPSPFDNFCNSNSDQVRNSISDLRFLIDDDDSFDDLYFPSENESFCIPPDATKREMSGDFTPASGISGDCVNEDTEKNTNGVLISTSSCYNRESPTDSDFSGTSQSLSFSGQDSAKRKTEIEEDSSDESRRLGKDGFASVIKVGGEEDDEKKKNVRLVRNRESAHLSRQRKKHYVEELEDKVKNMHSTISELSSKMSYFVAENVTLRQQMGTRFSSGPPMVPIVYPWMQYPAYMVKPQGSQVALLPIPRLKPKHSVAKVKKFKKVASFSVFGFLFCMFLFGALVNISYGEYKSNYVTDGVYDQSRGRVLVVDSSRVHCGGDSDQGVGRNVSETENLGPPRNSSEPLVASLFVPRNEKLVKIDGNLIIHSVLASEKARDSETKNEEGKSVLATTTKTLSPALPLPDSTSPRTRDVSKHLYSETGKGLSSSGSDDASNDQLKSTIANGKMQQWFREGVAGPMFSSGMCTEVFQFDVSSNSGAIIPASPHTQQCKNTSDTQKGKKNRRILSGGLPVSDFNLTKEDHNSSSKDKFRETKPGPSMVVSVLVDPREGGNGDIDGMMGGTKPQSRVFIVVLVDGVKYITYSCVLPRPDVPHLMTS.

At 1 to 287 (MAEPVLEDTY…VAKVKKFKKV (287 aa)) the chain is on the cytoplasmic side. A compositionally biased stretch (polar residues) spans 109–135 (SSCYNRESPTDSDFSGTSQSLSFSGQD). Positions 109–155 (SSCYNRESPTDSDFSGTSQSLSFSGQDSAKRKTEIEEDSSDESRRLG) are disordered. In terms of domain architecture, bZIP spans 172–235 (EKKKNVRLVR…VTLRQQMGTR (64 aa)). Residues 173–205 (KKKNVRLVRNRESAHLSRQRKKHYVEELEDKVK) are basic motif. The leucine-zipper stretch occupies residues 211–218 (ISELSSKM). The chain crosses the membrane as a helical span at residues 288 to 308 (ASFSVFGFLFCMFLFGALVNI). At 309–620 (SYGEYKSNYV…RPDVPHLMTS (312 aa)) the chain is on the lumenal side. Disordered stretches follow at residues 343 to 364 (DSDQ…PRNS), 398 to 460 (ARDS…SNDQ), and 505 to 557 (PASP…RETK). N-linked (GlcNAc...) asparagine glycans are attached at residues Asn351 and Asn363. Residues 352–364 (VSETENLGPPRNS) show a composition bias toward polar residues. 2 stretches are compositionally biased toward basic and acidic residues: residues 398 to 409 (ARDSETKNEEGK) and 432 to 441 (RTRDVSKHLY). Polar residues-rich tracts occupy residues 447–460 (GLSS…SNDQ) and 508–519 (PHTQQCKNTSDT). N-linked (GlcNAc...) asparagine glycosylation occurs at Asn515. An RRIL cleavage motif motif is present at residues 526–529 (RRIL). N-linked (GlcNAc...) asparagine glycosylation is found at Asn539 and Asn546. The segment covering 540–557 (LTKEDHNSSSKDKFRETK) has biased composition (basic and acidic residues).

The protein belongs to the bZIP family. In terms of assembly, interacts with BZIP28.

The protein resides in the endoplasmic reticulum membrane. It is found in the nucleus. Functionally, transcriptional activator involved in stress responses. This chain is bZIP transcription factor 49, found in Arabidopsis thaliana (Mouse-ear cress).